The following is a 394-amino-acid chain: Elongation factor Tu (394 aa).

In terms of domain architecture, tr-type G spans 10-204 (KPHVNVGTIG…AVDSYIPQPE (195 aa)). The G1 stretch occupies residues 19 to 26 (GHVDHGKT). Position 19-26 (19-26 (GHVDHGKT)) interacts with GTP. A Mg(2+)-binding site is contributed by threonine 26. Residues 60–64 (GITIS) form a G2 region. Residues 81–84 (DCPG) are G3. Residues 81-85 (DCPGH) and 136-139 (NKCD) each bind GTP. The G4 stretch occupies residues 136 to 139 (NKCD). The G5 stretch occupies residues 174 to 176 (SAV).

It belongs to the TRAFAC class translation factor GTPase superfamily. Classic translation factor GTPase family. EF-Tu/EF-1A subfamily. Monomer.

It is found in the cytoplasm. It carries out the reaction GTP + H2O = GDP + phosphate + H(+). Its function is as follows. GTP hydrolase that promotes the GTP-dependent binding of aminoacyl-tRNA to the A-site of ribosomes during protein biosynthesis. In Akkermansia muciniphila (strain ATCC BAA-835 / DSM 22959 / JCM 33894 / BCRC 81048 / CCUG 64013 / CIP 107961 / Muc), this protein is Elongation factor Tu.